A 211-amino-acid polypeptide reads, in one-letter code: Small ribosomal subunit protein uS3 (211 aa).

Residues 16–85 (IDEYFKTKLV…NPQIEVKQVE (70 aa)) enclose the KH type-2 domain.

Belongs to the universal ribosomal protein uS3 family. As to quaternary structure, part of the 30S ribosomal subunit.

Functionally, binds the lower part of the 30S subunit head. In Methanococcus maripaludis (strain DSM 14266 / JCM 13030 / NBRC 101832 / S2 / LL), this protein is Small ribosomal subunit protein uS3.